The sequence spans 523 residues: Glutamate--cysteine ligase (523 aa).

This sequence belongs to the glutamate--cysteine ligase type 1 family. Type 1 subfamily.

The catalysed reaction is L-cysteine + L-glutamate + ATP = gamma-L-glutamyl-L-cysteine + ADP + phosphate + H(+). The protein operates within sulfur metabolism; glutathione biosynthesis; glutathione from L-cysteine and L-glutamate: step 1/2. The chain is Glutamate--cysteine ligase from Baumannia cicadellinicola subsp. Homalodisca coagulata.